The chain runs to 599 residues: Adenine deaminase (599 aa).

This sequence belongs to the metallo-dependent hydrolases superfamily. Adenine deaminase family. The cofactor is Mn(2+).

The catalysed reaction is adenine + H2O + H(+) = hypoxanthine + NH4(+). In Clostridium botulinum (strain Langeland / NCTC 10281 / Type F), this protein is Adenine deaminase.